The primary structure comprises 455 residues: Probable hexose phosphate transport protein (455 aa).

The next 5 helical transmembrane spans lie at 34–54 (IFYS…SFTF), 70–90 (LGII…VSGV), 113–133 (IFFG…LNGW), 161–181 (VWST…GFII), and 185–205 (GWRG…LVLI). The tract at residues 219–242 (PIEKYKRDPHHAHHEGKSASEGTE) is disordered. Helical transmembrane passes span 257 to 277 (YVLT…IYIV), 302 to 322 (FCVS…GWLS), 331 to 351 (GPMN…MWFS), 363 to 383 (LLFV…LAAA), 394 to 414 (ASGF…YPLG), and 424 to 444 (GFFI…LPTW).

This sequence belongs to the major facilitator superfamily. Organophosphate:Pi antiporter (OPA) (TC 2.A.1.4) family.

The protein localises to the cell membrane. In terms of biological role, transport protein for sugar phosphate uptake. This chain is Probable hexose phosphate transport protein (uhpC), found in Chlamydia pneumoniae (Chlamydophila pneumoniae).